The sequence spans 208 residues: Uracil phosphoribosyltransferase (208 aa).

5-phospho-alpha-D-ribose 1-diphosphate-binding positions include R78, R103, and D130 to S138. Uracil-binding positions include I193 and G198–A200. D199 contributes to the 5-phospho-alpha-D-ribose 1-diphosphate binding site.

This sequence belongs to the UPRTase family. Mg(2+) serves as cofactor.

The catalysed reaction is UMP + diphosphate = 5-phospho-alpha-D-ribose 1-diphosphate + uracil. It participates in pyrimidine metabolism; UMP biosynthesis via salvage pathway; UMP from uracil: step 1/1. Allosterically activated by GTP. Functionally, catalyzes the conversion of uracil and 5-phospho-alpha-D-ribose 1-diphosphate (PRPP) to UMP and diphosphate. In Brucella abortus biovar 1 (strain 9-941), this protein is Uracil phosphoribosyltransferase.